The primary structure comprises 127 residues: Large ribosomal subunit protein bL17 (127 aa).

This sequence belongs to the bacterial ribosomal protein bL17 family. In terms of assembly, part of the 50S ribosomal subunit. Contacts protein L32.

The protein is Large ribosomal subunit protein bL17 of Fervidobacterium nodosum (strain ATCC 35602 / DSM 5306 / Rt17-B1).